We begin with the raw amino-acid sequence, 182 residues long: Ribosome maturation factor RimM (182 aa).

The region spanning 103 to 182 is the PRC barrel domain; that stretch reads EDEFYWRELF…RIEVDWDPGF (80 aa).

This sequence belongs to the RimM family. In terms of assembly, binds ribosomal protein uS19.

It is found in the cytoplasm. An accessory protein needed during the final step in the assembly of 30S ribosomal subunit, possibly for assembly of the head region. Essential for efficient processing of 16S rRNA. May be needed both before and after RbfA during the maturation of 16S rRNA. It has affinity for free ribosomal 30S subunits but not for 70S ribosomes. The sequence is that of Ribosome maturation factor RimM from Vibrio vulnificus (strain CMCP6).